Here is a 111-residue protein sequence, read N- to C-terminus: MNSVPVMLFSISILLAAMLTEGRGLTQTQKESIFSAEHKSDLKSYLEMLVCRRLRDVPESVIHISKVSKEILPDDLLSTYLLELLVCFDKDKLVQSKGIVFNTIKRLLTNT.

The N-terminal stretch at 1–24 is a signal peptide; that stretch reads MNSVPVMLFSISILLAAMLTEGRG.

The protein belongs to the exocrine gland-secreted peptide family. In terms of tissue distribution, expressed in acinar cells of the lacrimal gland from where it is secreted into tears. Not detected in a range of other tissues tested including other exocrine glands, internal organs and sensory epithelia.

Its subcellular location is the secreted. Its function is as follows. Pheromone produced by juveniles which activates a small number of vomeronasal organ sensory neurons and exhibits a powerful inhibitory effect on adult male mating behavior. In Mus musculus (Mouse), this protein is Exocrine gland-secreted peptide 22.